The chain runs to 433 residues: Tol-Pal system protein TolB (433 aa).

The first 21 residues, 1–21 (MRNLLRGMLVVICCMAGIAAA), serve as a signal peptide directing secretion.

The protein belongs to the TolB family. The Tol-Pal system is composed of five core proteins: the inner membrane proteins TolA, TolQ and TolR, the periplasmic protein TolB and the outer membrane protein Pal. They form a network linking the inner and outer membranes and the peptidoglycan layer.

The protein localises to the periplasm. Functionally, part of the Tol-Pal system, which plays a role in outer membrane invagination during cell division and is important for maintaining outer membrane integrity. The protein is Tol-Pal system protein TolB of Pseudomonas fluorescens (strain SBW25).